The sequence spans 347 residues: NAD-dependent alcohol dehydrogenase (347 aa).

Lysine 11 carries the post-translational modification N6-methyllysine; partial. Positions 38, 68, 98, 101, 104, 112, and 154 each coordinate Zn(2+). Position 213 is an N6-methyllysine; partial (lysine 213).

This sequence belongs to the zinc-containing alcohol dehydrogenase family. In terms of assembly, homodimer and homotetramer. Requires Zn(2+) as cofactor.

It carries out the reaction a primary alcohol + NAD(+) = an aldehyde + NADH + H(+). The enzyme catalyses a secondary alcohol + NAD(+) = a ketone + NADH + H(+). In Saccharolobus solfataricus (strain ATCC 35092 / DSM 1617 / JCM 11322 / P2) (Sulfolobus solfataricus), this protein is NAD-dependent alcohol dehydrogenase (adh).